Consider the following 101-residue polypeptide: Large ribosomal subunit protein uL23 (101 aa).

It belongs to the universal ribosomal protein uL23 family. In terms of assembly, part of the 50S ribosomal subunit. Contacts protein L29, and trigger factor when it is bound to the ribosome.

Functionally, one of the early assembly proteins it binds 23S rRNA. One of the proteins that surrounds the polypeptide exit tunnel on the outside of the ribosome. Forms the main docking site for trigger factor binding to the ribosome. In Wigglesworthia glossinidia brevipalpis, this protein is Large ribosomal subunit protein uL23.